The chain runs to 532 residues: Intercellular adhesion molecule 1 (532 aa).

Residues 1–27 (MAPSSPRPALPALLVLLGALFPGPGNA) form the signal peptide. Residues 28-480 (QTSVSPPKVI…TVNVLSPRYE (453 aa)) are Extracellular-facing. Ig-like C2-type domains follow at residues 41-103 (GGSV…QSTA) and 128-193 (GKDL…LDLR). Disulfide bonds link C48–C92, C52–C96, and C135–C186. N145 is a glycosylation site (N-linked (GlcNAc...) asparagine). Positions 152 to 154 (RGE) match the Cell attachment site; atypical motif. N-linked (GlcNAc...) asparagine glycosylation is found at N183, N202, N267, and N296. 2 consecutive Ig-like C2-type domains span residues 230–297 (DTQG…LGNQ) and 325–378 (GTEV…LEVA). Residues C237 and C290 are joined by a disulfide bond. An intrachain disulfide couples C332 to C371. Residues N385 and N406 are each glycosylated (N-linked (GlcNAc...) asparagine). Cystine bridges form between C403–C419, C419–C457, and C431–C457. Positions 412–464 (NSQQTPMCQASGNPLPELKCLKDGTFPLPVGESVTVTRDLEGTYLCRARSTQG) constitute an Ig-like C2-type 5 domain. A helical transmembrane segment spans residues 481–503 (IVIITVVAAAVIMGTAGLSTYLY). The Cytoplasmic segment spans residues 504–532 (NRQRKIRKYRLQQAQKGTPMKPNTQATPP). A phosphothreonine mark is found at T521 and T530.

This sequence belongs to the immunoglobulin superfamily. ICAM family. In terms of assembly, homodimer. Interacts with MUC1 and promotes cell aggregation in epithelial cells. Interacts with ARHGEF26/SGEF. Interacts (on T cell side) with CD81, CD247 and CD9 at immunological synapses between antigen-presenting cells and T cells. In terms of processing, monoubiquitinated, which is promoted by MARCH9 and leads to endocytosis.

The protein localises to the membrane. Its function is as follows. ICAM proteins are ligands for the leukocyte adhesion protein LFA-1 (integrin alpha-L/beta-2). During leukocyte trans-endothelial migration, ICAM1 engagement promotes the assembly of endothelial apical cups through ARHGEF26/SGEF and RHOG activation. The chain is Intercellular adhesion molecule 1 (ICAM1) from Pan paniscus (Pygmy chimpanzee).